Reading from the N-terminus, the 369-residue chain is Queuine tRNA-ribosyltransferase (369 aa).

The active-site Proton acceptor is the D89. Substrate-binding positions include 89-93 (DSGGF), D142, Q184, and G211. The segment at 242–248 (GGGSPEL) is RNA binding. Catalysis depends on D261, which acts as the Nucleophile. Residues 266–270 (TRIAR) are RNA binding; important for wobble base 34 recognition. Zn(2+) contacts are provided by C299, C301, C304, and H330.

Belongs to the queuine tRNA-ribosyltransferase family. Homodimer. Within each dimer, one monomer is responsible for RNA recognition and catalysis, while the other monomer binds to the replacement base PreQ1. Requires Zn(2+) as cofactor.

The catalysed reaction is 7-aminomethyl-7-carbaguanine + guanosine(34) in tRNA = 7-aminomethyl-7-carbaguanosine(34) in tRNA + guanine. It participates in tRNA modification; tRNA-queuosine biosynthesis. Its function is as follows. Catalyzes the base-exchange of a guanine (G) residue with the queuine precursor 7-aminomethyl-7-deazaguanine (PreQ1) at position 34 (anticodon wobble position) in tRNAs with GU(N) anticodons (tRNA-Asp, -Asn, -His and -Tyr). Catalysis occurs through a double-displacement mechanism. The nucleophile active site attacks the C1' of nucleotide 34 to detach the guanine base from the RNA, forming a covalent enzyme-RNA intermediate. The proton acceptor active site deprotonates the incoming PreQ1, allowing a nucleophilic attack on the C1' of the ribose to form the product. After dissociation, two additional enzymatic reactions on the tRNA convert PreQ1 to queuine (Q), resulting in the hypermodified nucleoside queuosine (7-(((4,5-cis-dihydroxy-2-cyclopenten-1-yl)amino)methyl)-7-deazaguanosine). In Thermotoga sp. (strain RQ2), this protein is Queuine tRNA-ribosyltransferase.